The following is a 948-amino-acid chain: Putative JmjC domain-containing histone demethylation protein 1 (948 aa).

The JmjC domain maps to 243 to 402 (VSTTKLAYYV…PQLSIYNLEL (160 aa)). Thr294 provides a ligand contact to substrate. The Fe cation site is built by His297 and Glu299. Lys314 provides a ligand contact to substrate.

The protein belongs to the JHDM1 histone demethylase family. Requires Fe(2+) as cofactor.

It localises to the nucleus. The enzyme catalyses N(6),N(6)-dimethyl-L-lysyl(36)-[histone H3] + 2 2-oxoglutarate + 2 O2 = L-lysyl(36)-[histone H3] + 2 formaldehyde + 2 succinate + 2 CO2. Its function is as follows. May be a histone demethylase that specifically demethylates 'Lys-36' of histone H3, thereby playing a central role in histone code. Represses transcriptional silencing by negatively affecting heterochromatin stability. In Schizosaccharomyces pombe (strain 972 / ATCC 24843) (Fission yeast), this protein is Putative JmjC domain-containing histone demethylation protein 1 (jhd1).